Here is a 384-residue protein sequence, read N- to C-terminus: UDP-N-acetylglucosamine--N-acetylmuramyl-(pentapeptide) pyrophosphoryl-undecaprenol N-acetylglucosamine transferase (384 aa).

UDP-N-acetyl-alpha-D-glucosamine contacts are provided by residues 22–24 (TGG), R179, S209, and Q312.

This sequence belongs to the glycosyltransferase 28 family. MurG subfamily.

Its subcellular location is the cell inner membrane. It carries out the reaction di-trans,octa-cis-undecaprenyl diphospho-N-acetyl-alpha-D-muramoyl-L-alanyl-D-glutamyl-meso-2,6-diaminopimeloyl-D-alanyl-D-alanine + UDP-N-acetyl-alpha-D-glucosamine = di-trans,octa-cis-undecaprenyl diphospho-[N-acetyl-alpha-D-glucosaminyl-(1-&gt;4)]-N-acetyl-alpha-D-muramoyl-L-alanyl-D-glutamyl-meso-2,6-diaminopimeloyl-D-alanyl-D-alanine + UDP + H(+). Its pathway is cell wall biogenesis; peptidoglycan biosynthesis. Cell wall formation. Catalyzes the transfer of a GlcNAc subunit on undecaprenyl-pyrophosphoryl-MurNAc-pentapeptide (lipid intermediate I) to form undecaprenyl-pyrophosphoryl-MurNAc-(pentapeptide)GlcNAc (lipid intermediate II). The protein is UDP-N-acetylglucosamine--N-acetylmuramyl-(pentapeptide) pyrophosphoryl-undecaprenol N-acetylglucosamine transferase of Treponema pallidum (strain Nichols).